We begin with the raw amino-acid sequence, 454 residues long: Caspase-9 (454 aa).

The region spanning 1–92 (MDEADRQLLR…GTLASLLQSG (92 aa)) is the CARD domain. T163 carries the phosphothreonine; by MAPK1 modification. Phosphotyrosine; by ABL1 is present on Y191. Active-site residues include H275 and C325. Phosphoserine occurs at positions 340 and 348. Positions 354 to 367 (AVPYQEGPRPLDQL) are excised as a propeptide.

Belongs to the peptidase C14A family. In terms of assembly, heterotetramer that consists of two anti-parallel arranged heterodimers, each one formed by a 35 kDa (p35) and a 10 kDa (p10) subunit. Caspase-9 and APAF1 bind to each other via their respective NH2-terminal CED-3 homologous domains in the presence of cytochrome C and ATP. Interacts (inactive form) with EFHD2. Interacts with HAX1. Interacts with BIRC2/c-IAP1, XIAP/BIRC4, BIRC5/survivin, BIRC6/bruce and BIRC7/livin. Interacts with ABL1 (via SH3 domain); the interaction is direct and increased in the response of cells to genotoxic stress and ABL1/c-Abl activation. Interacts with BCL2L10. In terms of processing, cleavages at Asp-353 by granzyme B and at Asp-368 by caspase-3 generate the two active subunits. Caspase-8 and -10 can also be involved in these processing events. Phosphorylated at Thr-163 by MAPK1/ERK2. Phosphorylation at Thr-163 is sufficient to block caspase-9 processing and subsequent caspase-3 activation. Phosphorylation on Tyr-191 by ABL1/c-Abl; occurs in the response of cells to DNA damage. Post-translationally, ubiquitinated by BIRC6; this activity is inhibited by DIABLO/SMAC.

The catalysed reaction is Strict requirement for an Asp residue at position P1 and with a marked preference for His at position P2. It has a preferred cleavage sequence of Leu-Gly-His-Asp-|-Xaa.. Inhibited by BIRC6; following inhibition of BIRC6-caspase binding by DIABLO/SMAC, BIRC6 is subjected to caspase cleavage, leading to an increase in active caspases. Involved in the activation cascade of caspases responsible for apoptosis execution. Binding of caspase-9 to Apaf-1 leads to activation of the protease which then cleaves and activates effector caspases caspase-3 (CASP3) or caspase-7 (CASP7). Promotes DNA damage-induced apoptosis in a ABL1/c-Abl-dependent manner. Proteolytically cleaves poly(ADP-ribose) polymerase (PARP). Cleaves BIRC6 following inhibition of BIRC6-caspase binding by DIABLO/SMAC. The chain is Caspase-9 (Casp9) from Mus musculus (Mouse).